Consider the following 109-residue polypeptide: Hainantoxin-XVIII-5 (109 aa).

The signal sequence occupies residues 1-18 (MKLSIIIIATSLVIAVVA). The propeptide occupies 19-46 (FPSKDSKAIENDKTEQRMEIVVQETARA). 4 cysteine pairs are disulfide-bonded: Cys47-Cys62, Cys55-Cys68, Cys59-Cys108, and Cys61-Cys81.

It belongs to the neurotoxin 25 family. F7 subfamily. In terms of tissue distribution, expressed by the venom gland.

The protein localises to the secreted. Its function is as follows. Putative ion channel inhibitor. The polypeptide is Hainantoxin-XVIII-5 (Cyriopagopus hainanus (Chinese bird spider)).